The following is a 431-amino-acid chain: Adenylosuccinate synthetase (431 aa).

GTP contacts are provided by residues 21–27 (GDEGKGK) and 49–51 (GHT). D22 functions as the Proton acceptor in the catalytic mechanism. Residues D22 and G49 each coordinate Mg(2+). IMP contacts are provided by residues 22–25 (DEGK), 47–50 (NAGH), T138, R152, N230, T245, and R309. Catalysis depends on H50, which acts as the Proton donor. 305–311 (ATTGRPR) serves as a coordination point for substrate. Residues R311, 337–339 (KLD), and 419–421 (GNG) contribute to the GTP site.

This sequence belongs to the adenylosuccinate synthetase family. Homodimer. Mg(2+) serves as cofactor.

It is found in the cytoplasm. The enzyme catalyses IMP + L-aspartate + GTP = N(6)-(1,2-dicarboxyethyl)-AMP + GDP + phosphate + 2 H(+). The protein operates within purine metabolism; AMP biosynthesis via de novo pathway; AMP from IMP: step 1/2. Functionally, plays an important role in the de novo pathway and in the salvage pathway of purine nucleotide biosynthesis. Catalyzes the first committed step in the biosynthesis of AMP from IMP. In Paramecium tetraurelia, this protein is Adenylosuccinate synthetase.